Consider the following 51-residue polypeptide: Large ribosomal subunit protein bL33 (51 aa).

The tract at residues 1 to 20 (MRDKIRLNSSAGTGHFYTTD) is disordered.

This sequence belongs to the bacterial ribosomal protein bL33 family.

In Psychromonas ingrahamii (strain DSM 17664 / CCUG 51855 / 37), this protein is Large ribosomal subunit protein bL33.